Here is a 199-residue protein sequence, read N- to C-terminus: Holliday junction branch migration complex subunit RuvA (199 aa).

The tract at residues 1 to 64 (MIALLTGRLA…EDSISLFGFR (64 aa)) is domain I. The segment at 65–143 (TLAEKEFFQL…KMDVAPSAQE (79 aa)) is domain II. Residues 144 to 154 (APSSEAPAEVA) are flexible linker. Positions 154-199 (ADDVASALVNLGYKEAVVRKVLAEMSIEPDASTEAVLRQALKVLMK) are domain III.

This sequence belongs to the RuvA family. In terms of assembly, homotetramer. Forms an RuvA(8)-RuvB(12)-Holliday junction (HJ) complex. HJ DNA is sandwiched between 2 RuvA tetramers; dsDNA enters through RuvA and exits via RuvB. An RuvB hexamer assembles on each DNA strand where it exits the tetramer. Each RuvB hexamer is contacted by two RuvA subunits (via domain III) on 2 adjacent RuvB subunits; this complex drives branch migration. In the full resolvosome a probable DNA-RuvA(4)-RuvB(12)-RuvC(2) complex forms which resolves the HJ.

It is found in the cytoplasm. The RuvA-RuvB-RuvC complex processes Holliday junction (HJ) DNA during genetic recombination and DNA repair, while the RuvA-RuvB complex plays an important role in the rescue of blocked DNA replication forks via replication fork reversal (RFR). RuvA specifically binds to HJ cruciform DNA, conferring on it an open structure. The RuvB hexamer acts as an ATP-dependent pump, pulling dsDNA into and through the RuvAB complex. HJ branch migration allows RuvC to scan DNA until it finds its consensus sequence, where it cleaves and resolves the cruciform DNA. The polypeptide is Holliday junction branch migration complex subunit RuvA (Geobacter sulfurreducens (strain ATCC 51573 / DSM 12127 / PCA)).